Reading from the N-terminus, the 132-residue chain is Sirohydrochlorin cobaltochelatase (132 aa).

Catalysis depends on H10, which acts as the Proton acceptor. H10 serves as a coordination point for Co(2+). Substrate is bound by residues R46 and 69 to 74 (ISYGLH). H74 serves as a coordination point for Co(2+).

This sequence belongs to the CbiX family. CbiXS subfamily. Homotetramer; dimer of dimers.

The enzyme catalyses Co-sirohydrochlorin + 2 H(+) = sirohydrochlorin + Co(2+). It participates in cofactor biosynthesis; adenosylcobalamin biosynthesis; cob(II)yrinate a,c-diamide from sirohydrochlorin (anaerobic route): step 1/10. Its function is as follows. Catalyzes the insertion of Co(2+) into sirohydrochlorin as part of the anaerobic pathway to cobalamin biosynthesis. The protein is Sirohydrochlorin cobaltochelatase of Archaeoglobus fulgidus (strain ATCC 49558 / DSM 4304 / JCM 9628 / NBRC 100126 / VC-16).